A 350-amino-acid chain; its full sequence is Decarboxylase iboD (350 aa).

The protein belongs to the phosphatidylserine decarboxylase family.

The protein operates within secondary metabolite biosynthesis. Decarboxylase; part of the gene cluster that mediates the biosynthesis of the psychoactive metabolites ibotenic acid and muscimol. The first committed step is glutamate hydroxylation by the 2-oxoglutarate-dependent dioxygenase iboH, and the last step is decarboxylation of ibotenic acid to muscimol by the decarboxylase iboD. The order of the intermediate reactions is somewhat ambiguous. IboA likely activates the carboxylic acid at position 5 to introduce an amide bond, and the flavin monooxygenase iboF generates the N-O bond. There are several options for the latter step. One option is that iboF directly hydroxylates the amide nitrogen formed by iboA to produce a hydroxamic acid species. Another option is that iboF hydroxylates an external N-containing compound, whose resulting N-O bond is subsequently introduced into the hydroxyglutamate scaffold. The paralogous PLP-dependent cystathionine gamma-synthase-like enzymes iboG1 and iboG2 are likely involved in substitution of the OH group at position 3 by the O-N moiety. The first cyclic intermediate is most probably tricholomic acid which is likely desaturated to ibotenic acid by the cytochrome P450 monooxygenase iboC. The chain is Decarboxylase iboD from Amanita muscaria (strain Koide BX008).